Here is a 93-residue protein sequence, read N- to C-terminus: Small ribosomal subunit protein uS19c (93 aa).

Belongs to the universal ribosomal protein uS19 family.

Its subcellular location is the plastid. It localises to the chloroplast. Functionally, protein S19 forms a complex with S13 that binds strongly to the 16S ribosomal RNA. The sequence is that of Small ribosomal subunit protein uS19c from Zygnema circumcarinatum (Green alga).